Reading from the N-terminus, the 90-residue chain is Small ribosomal subunit protein uS19 (90 aa).

This sequence belongs to the universal ribosomal protein uS19 family.

Functionally, protein S19 forms a complex with S13 that binds strongly to the 16S ribosomal RNA. The chain is Small ribosomal subunit protein uS19 from Nitrosococcus oceani (strain ATCC 19707 / BCRC 17464 / JCM 30415 / NCIMB 11848 / C-107).